Reading from the N-terminus, the 147-residue chain is Nucleoside diphosphate kinase (147 aa).

Positions 9, 57, 85, 91, 102, and 112 each coordinate ATP. His-115 functions as the Pros-phosphohistidine intermediate in the catalytic mechanism.

This sequence belongs to the NDK family. In terms of assembly, homotetramer. Requires Mg(2+) as cofactor.

It is found in the cytoplasm. The catalysed reaction is a 2'-deoxyribonucleoside 5'-diphosphate + ATP = a 2'-deoxyribonucleoside 5'-triphosphate + ADP. It carries out the reaction a ribonucleoside 5'-diphosphate + ATP = a ribonucleoside 5'-triphosphate + ADP. In terms of biological role, major role in the synthesis of nucleoside triphosphates other than ATP. The ATP gamma phosphate is transferred to the NDP beta phosphate via a ping-pong mechanism, using a phosphorylated active-site intermediate. This chain is Nucleoside diphosphate kinase, found in Thermosipho africanus (strain TCF52B).